Consider the following 556-residue polypeptide: Phenylalanine--tRNA ligase beta subunit (556 aa).

In terms of domain architecture, B5 spans 278 to 353; it reads LTPKEFEVEL…IAYGYNNIEP (76 aa). The Mg(2+) site is built by aspartate 331, aspartate 337, glutamate 340, and aspartate 341.

This sequence belongs to the phenylalanyl-tRNA synthetase beta subunit family. Type 2 subfamily. As to quaternary structure, tetramer of two alpha and two beta subunits. The cofactor is Mg(2+).

It is found in the cytoplasm. The enzyme catalyses tRNA(Phe) + L-phenylalanine + ATP = L-phenylalanyl-tRNA(Phe) + AMP + diphosphate + H(+). The protein is Phenylalanine--tRNA ligase beta subunit of Pyrococcus horikoshii (strain ATCC 700860 / DSM 12428 / JCM 9974 / NBRC 100139 / OT-3).